Reading from the N-terminus, the 855-residue chain is Inactive rhomboid protein 1 (855 aa).

The segment at 1 to 36 (MSEARRDSTSSLQRKKPPWLKLDIPSAVPPTAEEPS) is disordered. The Cytoplasmic segment spans residues 1 to 411 (MSEARRDSTS…HRPFFTYWLT (411 aa)). A phosphoserine mark is found at S76 and S176. A phosphothreonine mark is found at T180 and T183. S390 carries the post-translational modification Phosphoserine. Residues 412 to 432 (FVHSLVTILAVCIYGIAPVGF) form a helical membrane-spanning segment. Topologically, residues 433–655 (SQHETVDSVL…NPEVPDQFYR (223 aa)) are lumenal. An N-linked (GlcNAc...) asparagine glycan is attached at N583. Residues 656-676 (LWLSLFLHAGILHCLVSICFQ) form a helical membrane-spanning segment. The Cytoplasmic segment spans residues 677-691 (MTVLRDLEKLAGWHR). The helical transmembrane segment at 692-712 (IAIIYLLSGVTGNLASAIFLP) threads the bilayer. Residues 713–714 (YR) lie on the Lumenal side of the membrane. The helical transmembrane segment at 715–735 (AEVGPAGSQFGILACLFVELF) threads the bilayer. The Cytoplasmic segment spans residues 736–746 (QSWQILARPWR). The helical transmembrane segment at 747-767 (AFFKLLAVVLFLFTFGLLPWI) threads the bilayer. At 768 to 772 (DNFAH) the chain is on the lumenal side. The chain crosses the membrane as a helical span at residues 773–793 (ISGFISGLFLSFAFLPYISFG). Residues 794–803 (KFDLYRKRCQ) are Cytoplasmic-facing. The helical transmembrane segment at 804–824 (IIIFQVVFLGLLAGLVVLFYF) threads the bilayer. Topologically, residues 825–855 (YPVRCEWCEFLTCIPFTDKFCEKYELDAQLH) are lumenal.

This sequence belongs to the peptidase S54 family. In terms of assembly, homodimer, or homooligomer. Interacts with TGFA and HBEGF. Interacts with EGF; may retain EGF in the endoplasmic reticulum and regulates its degradation through the endoplasmic reticulum-associated degradation (ERAD). Interacts (via cytoplasmic N-terminus) with FRMD8/iTAP; this interaction leads to mutual protein stabilization. Interacts with ADAM17/TACE.

It localises to the endoplasmic reticulum membrane. It is found in the golgi apparatus membrane. In terms of biological role, regulates ADAM17 protease, a sheddase of the epidermal growth factor (EGF) receptor ligands and TNF, thereby plays a role in sleep, cell survival, proliferation, migration and inflammation. Does not exhibit any protease activity on its own. The sequence is that of Inactive rhomboid protein 1 (RHBDF1) from Papio anubis (Olive baboon).